The sequence spans 458 residues: Glycogen synthase (458 aa).

Position 15 (K15) interacts with ADP-alpha-D-glucose.

It belongs to the glycosyltransferase 1 family. Bacterial/plant glycogen synthase subfamily.

It catalyses the reaction [(1-&gt;4)-alpha-D-glucosyl](n) + ADP-alpha-D-glucose = [(1-&gt;4)-alpha-D-glucosyl](n+1) + ADP + H(+). It functions in the pathway glycan biosynthesis; glycogen biosynthesis. In terms of biological role, synthesizes alpha-1,4-glucan chains using ADP-glucose. This is Glycogen synthase from Gloeobacter violaceus (strain ATCC 29082 / PCC 7421).